We begin with the raw amino-acid sequence, 136 residues long: Large ribosomal subunit protein uL16 (136 aa).

It belongs to the universal ribosomal protein uL16 family. In terms of assembly, part of the 50S ribosomal subunit.

In terms of biological role, binds 23S rRNA and is also seen to make contacts with the A and possibly P site tRNAs. This is Large ribosomal subunit protein uL16 from Haemophilus influenzae (strain 86-028NP).